The following is a 243-amino-acid chain: Adenosylcobinamide-GDP ribazoletransferase (243 aa).

5 helical membrane passes run 31–51 (LLFY…FNTL), 55–75 (APLM…SGGL), 109–129 (IAVV…LALI), 133–153 (ASVW…GLFL), and 188–208 (VLLA…CFFW).

This sequence belongs to the CobS family. Requires Mg(2+) as cofactor.

Its subcellular location is the cell inner membrane. The catalysed reaction is alpha-ribazole + adenosylcob(III)inamide-GDP = adenosylcob(III)alamin + GMP + H(+). It carries out the reaction alpha-ribazole 5'-phosphate + adenosylcob(III)inamide-GDP = adenosylcob(III)alamin 5'-phosphate + GMP + H(+). It functions in the pathway cofactor biosynthesis; adenosylcobalamin biosynthesis; adenosylcobalamin from cob(II)yrinate a,c-diamide: step 7/7. In terms of biological role, joins adenosylcobinamide-GDP and alpha-ribazole to generate adenosylcobalamin (Ado-cobalamin). Also synthesizes adenosylcobalamin 5'-phosphate from adenosylcobinamide-GDP and alpha-ribazole 5'-phosphate. In Pseudomonas syringae pv. syringae (strain B728a), this protein is Adenosylcobinamide-GDP ribazoletransferase.